The sequence spans 65 residues: MNFVKVLFFISACILIMLSAVSGAPEPRWKVFKKIERMGQHIRDGIIKAGPAVAVVGQASTIISG.

The signal sequence occupies residues 1 to 23 (MNFVKVLFFISACILIMLSAVSG).

This sequence belongs to the cecropin family.

The protein resides in the secreted. Its function is as follows. Has antibacterial activity. The chain is Cecropin (LOC113514368) from Galleria mellonella (Greater wax moth).